Reading from the N-terminus, the 351-residue chain is Transmembrane protein 115 (351 aa).

Residues 1 to 19 (MQRALPGARQHLGAILASA) are Cytoplasmic-facing. The tract at residues 1–205 (MQRALPGARQ…FGLLSSWVYL (205 aa)) is mediates homooligomerization. A helical transmembrane segment spans residues 20–40 (SVVVKALCAAVLFLYLLSFAV). Residues 41-97 (DTGCLAVTPGYLFPPNFWIWTLATHGLMEQHVWDVAISLTTVVVAGRLLEPLWGALE) are Lumenal-facing. A helical membrane pass occupies residues 98–118 (LLIFFSVVNVSVGLLGAFAYL). Over 119–126 (LTYMASFN) the chain is Cytoplasmic. The helical transmembrane segment at 127–147 (LVYLFTVRIHGALGFLGGVLV) threads the bilayer. The Lumenal segment spans residues 148–165 (ALKQTMGDCVVLRVPQVR). Residues 166–186 (VSVMPMLLLALLLLLRLATLL) form a helical membrane-spanning segment. Residues 187–351 (QSPALASYGF…ITFEAAPPTL (165 aa)) lie on the Cytoplasmic side of the membrane. The segment at 206–229 (RFYQRHSRGRGDMADHFAFATFFP) is mediates localization to the Golgi. Residues 301–351 (QSIWPSMDDDEEESGAKVDSPLPSDKAPTPPGKGAAPESSLITFEAAPPTL) are disordered. Position 329 is a phosphothreonine (threonine 329).

The protein belongs to the TMEM115 family. In terms of assembly, homooligomer. Interacts with COPB1. May interact with LMAN1. Interacts with the COG complex; probably through COG3. Expressed strongly in kidney and skeletal muscle, followed by liver, placenta, pancreas, and lung, with low amounts in heart and only traces in brain. Widely expressed with ubiquitous expression in epithelial tissues (at protein level).

It localises to the golgi apparatus. The protein resides in the golgi stack membrane. Its function is as follows. May play a role in retrograde transport of proteins from the Golgi to the endoplasmic reticulum. May indirectly play a role in protein glycosylation in the Golgi. The sequence is that of Transmembrane protein 115 from Homo sapiens (Human).